The primary structure comprises 1392 residues: DNA-directed RNA polymerase subunit beta (1392 aa).

Belongs to the RNA polymerase beta chain family. The RNAP catalytic core consists of 2 alpha, 1 beta, 1 beta' and 1 omega subunit. When a sigma factor is associated with the core the holoenzyme is formed, which can initiate transcription.

The catalysed reaction is RNA(n) + a ribonucleoside 5'-triphosphate = RNA(n+1) + diphosphate. In terms of biological role, DNA-dependent RNA polymerase catalyzes the transcription of DNA into RNA using the four ribonucleoside triphosphates as substrates. The protein is DNA-directed RNA polymerase subunit beta of Neisseria meningitidis serogroup A / serotype 4A (strain DSM 15465 / Z2491).